A 398-amino-acid chain; its full sequence is Phosphoglycerate kinase (398 aa).

Residues 21–23 (DFN), Arg-36, 59–62 (HLGR), Arg-119, and Arg-157 each bind substrate. ATP contacts are provided by residues Lys-208, Gly-296, Glu-327, and 354–357 (GGDS).

This sequence belongs to the phosphoglycerate kinase family. As to quaternary structure, monomer.

The protein localises to the cytoplasm. It catalyses the reaction (2R)-3-phosphoglycerate + ATP = (2R)-3-phospho-glyceroyl phosphate + ADP. Its pathway is carbohydrate degradation; glycolysis; pyruvate from D-glyceraldehyde 3-phosphate: step 2/5. The protein is Phosphoglycerate kinase of Lactococcus lactis subsp. cremoris (strain SK11).